A 113-amino-acid chain; its full sequence is Protein ZEO1 (113 aa).

Polar residues predominate over residues 1-16 (MSEIQNKAETAAQDVQ). The segment at 1–96 (MSEIQNKAET…AVSEKKETKK (96 aa)) is disordered. The residue at position 2 (Ser-2) is an N-acetylserine. Ser-2 is modified (phosphoserine). Positions 2–97 (SEIQNKAETA…VSEKKETKKE (96 aa)) form a coiled coil. Basic and acidic residues predominate over residues 17–37 (QKLEETKESLQNKGQEVKEQA). Glycyl lysine isopeptide (Lys-Gly) (interchain with G-Cter in ubiquitin) cross-links involve residues Lys-18 and Lys-23. Position 25 is a phosphoserine (Ser-25). Glycyl lysine isopeptide (Lys-Gly) (interchain with G-Cter in ubiquitin) cross-links involve residues Lys-29 and Lys-34. Ser-40 bears the Phosphoserine mark. A Glycyl lysine isopeptide (Lys-Gly) (interchain with G-Cter in ubiquitin) cross-link involves residue Lys-45. A Phosphothreonine modification is found at Thr-49. The span at 53–82 (EQVKKEEQNIADGVEQKKTEAANKVEETKK) shows a compositional bias: basic and acidic residues. Glycyl lysine isopeptide (Lys-Gly) (interchain with G-Cter in ubiquitin) cross-links involve residues Lys-57 and Lys-82.

As to quaternary structure, interacts with MID2. In terms of processing, phosphorylation of Ser-25 is induced 2-fold in response to mating pheromone.

The protein localises to the cell membrane. In terms of biological role, acts antagonistically to MID2 in signaling cell wall stress to the PKC1-MPK1 cell integrity pathway. This is Protein ZEO1 (ZEO1) from Saccharomyces cerevisiae (strain ATCC 204508 / S288c) (Baker's yeast).